The chain runs to 623 residues: Transketolase (623 aa).

Met1 is modified (N-acetylmethionine). N6-acetyllysine is present on residues Lys6 and Lys11. His37 is a binding site for substrate. Residues Ser40 and His77 each coordinate thiamine diphosphate. Position 104 is a phosphoserine (Ser104). 123–125 (GSL) contributes to the thiamine diphosphate binding site. Lys144 is subject to N6-acetyllysine. Position 155 (Asp155) interacts with Mg(2+). Positions 156 and 185 each coordinate thiamine diphosphate. Asn185 and Leu187 together coordinate Mg(2+). Residues Lys204, Lys232, and Lys241 each carry the N6-acetyllysine modification. 2 residues coordinate thiamine diphosphate: Lys244 and His258. Residue His258 participates in substrate binding. Residue Lys260 is modified to N6-acetyllysine. Tyr275 bears the Phosphotyrosine mark. A Phosphothreonine modification is found at Thr287. Ser295 is subject to Phosphoserine. Arg318 and Ser345 together coordinate substrate. The residue at position 345 (Ser345) is a Phosphoserine. Lys352 is covalently cross-linked (Glycyl lysine isopeptide (Lys-Gly) (interchain with G-Cter in SUMO2)). The active-site Proton donor is the Glu366. Phe392 serves as a coordination point for thiamine diphosphate. Substrate-binding residues include His416 and Asp424. Residue Gln428 coordinates thiamine diphosphate. Arg474 contacts substrate. Residues Lys538 and Lys603 each carry the N6-acetyllysine modification.

This sequence belongs to the transketolase family. In terms of assembly, homodimer. Mg(2+) is required as a cofactor. Requires Ca(2+) as cofactor. The cofactor is Mn(2+). Co(2+) serves as cofactor. It depends on thiamine diphosphate as a cofactor.

The enzyme catalyses D-sedoheptulose 7-phosphate + D-glyceraldehyde 3-phosphate = aldehydo-D-ribose 5-phosphate + D-xylulose 5-phosphate. Catalyzes the transfer of a two-carbon ketol group from a ketose donor to an aldose acceptor, via a covalent intermediate with the cofactor thiamine pyrophosphate. This chain is Transketolase (Tkt), found in Mus musculus (Mouse).